The primary structure comprises 283 residues: MDLIAFANTFPRVWLLALLLLGLIIGSFLNVVIYRLPLMLERSWRQEARFHLGLPAGRPLARYDLCWPPSSCPHCHQRLRMRDNIPLLSWIWLRGRAHCCGGAVSWRYPLIELLSGLSFLLAGLLWQPGLALLGALLCFGIFVALAAIDARTQLLPDVMTLPLLWGGLLFNLADTFVPLEQAVVGAVAGYLSLWLIYWAFRLLSGREALGHGDFKLLAALGAWLGWQALPNLVLIASLTGLTATLLWQRIHRLSMQQPLAFGPWLAVSGAMGLVLNVLGGWSH.

Transmembrane regions (helical) follow at residues 13–33, 106–126, 128–148, 153–173, 176–196, 216–236, and 259–279; these read VWLLALLLLGLIIGSFLNVVI, WRYPLIELLSGLSFLLAGLLW, PGLALLGALLCFGIFVALAAI, QLLPDVMTLPLLWGGLLFNLA, FVPLEQAVVGAVAGYLSLWLI, LLAALGAWLGWQALPNLVLIA, and LAFGPWLAVSGAMGLVLNVLG.

This sequence belongs to the peptidase A24 family.

The protein localises to the cell inner membrane. The catalysed reaction is Typically cleaves a -Gly-|-Phe- bond to release an N-terminal, basic peptide of 5-8 residues from type IV prepilin, and then N-methylates the new N-terminal amino group, the methyl donor being S-adenosyl-L-methionine.. Its function is as follows. Plays a role in type II pseudopili formation by proteolytically removing the leader sequence from substrate proteins and subsequently monomethylating the alpha-amino group of the newly exposed N-terminal phenylalanine. Substrates include proteins required for biogenesis of the type II general secretory apparatus. The protein is Prepilin leader peptidase/N-methyltransferase (outO) of Dickeya chrysanthemi (Pectobacterium chrysanthemi).